A 463-amino-acid chain; its full sequence is Bifunctional protein HldE (463 aa).

Positions 1 to 311 (MKQILVVGDL…EEIALILNQT (311 aa)) are ribokinase. 191-194 (NRIE) lines the ATP pocket. The active site involves Asp260. The cytidylyltransferase stretch occupies residues 334–463 (FTNGCFDILH…IERIKRTCND (130 aa)).

It in the N-terminal section; belongs to the carbohydrate kinase PfkB family. The protein in the C-terminal section; belongs to the cytidylyltransferase family. Homodimer.

The catalysed reaction is D-glycero-beta-D-manno-heptose 7-phosphate + ATP = D-glycero-beta-D-manno-heptose 1,7-bisphosphate + ADP + H(+). The enzyme catalyses D-glycero-beta-D-manno-heptose 1-phosphate + ATP + H(+) = ADP-D-glycero-beta-D-manno-heptose + diphosphate. The protein operates within nucleotide-sugar biosynthesis; ADP-L-glycero-beta-D-manno-heptose biosynthesis; ADP-L-glycero-beta-D-manno-heptose from D-glycero-beta-D-manno-heptose 7-phosphate: step 1/4. It participates in nucleotide-sugar biosynthesis; ADP-L-glycero-beta-D-manno-heptose biosynthesis; ADP-L-glycero-beta-D-manno-heptose from D-glycero-beta-D-manno-heptose 7-phosphate: step 3/4. Functionally, catalyzes the phosphorylation of D-glycero-D-manno-heptose 7-phosphate at the C-1 position to selectively form D-glycero-beta-D-manno-heptose-1,7-bisphosphate. In terms of biological role, catalyzes the ADP transfer from ATP to D-glycero-beta-D-manno-heptose 1-phosphate, yielding ADP-D-glycero-beta-D-manno-heptose. This chain is Bifunctional protein HldE, found in Helicobacter pylori (strain Shi470).